A 215-amino-acid polypeptide reads, in one-letter code: Putative zinc finger protein ORF121 (215 aa).

Residues 53-105 (CVICMEPTYTKKTLAECDIEGGALRVTTMPCPTHYICDNCIRQEMEDKCPICR) form an RING-type; degenerate zinc finger.

The chain is Putative zinc finger protein ORF121 from Magallana gigas (Pacific oyster).